The sequence spans 158 residues: NAD(P)H-quinone oxidoreductase subunit J, chloroplastic (158 aa).

This sequence belongs to the complex I 30 kDa subunit family. NDH is composed of at least 16 different subunits, 5 of which are encoded in the nucleus.

Its subcellular location is the plastid. It is found in the chloroplast thylakoid membrane. The catalysed reaction is a plastoquinone + NADH + (n+1) H(+)(in) = a plastoquinol + NAD(+) + n H(+)(out). It carries out the reaction a plastoquinone + NADPH + (n+1) H(+)(in) = a plastoquinol + NADP(+) + n H(+)(out). Functionally, NDH shuttles electrons from NAD(P)H:plastoquinone, via FMN and iron-sulfur (Fe-S) centers, to quinones in the photosynthetic chain and possibly in a chloroplast respiratory chain. The immediate electron acceptor for the enzyme in this species is believed to be plastoquinone. Couples the redox reaction to proton translocation, and thus conserves the redox energy in a proton gradient. In Gossypium barbadense (Sea Island cotton), this protein is NAD(P)H-quinone oxidoreductase subunit J, chloroplastic.